A 211-amino-acid chain; its full sequence is Pyridoxine/pyridoxamine 5'-phosphate oxidase (211 aa).

Substrate is bound by residues 8–11 (RRDY) and Lys-66. FMN-binding positions include 61–66 (RLVLLK), 76–77 (FT), Arg-82, Lys-83, and Gln-105. Substrate is bound by residues Tyr-123, Arg-127, and Ser-131. FMN is bound by residues 140-141 (QS) and Trp-184. A substrate-binding site is contributed by 190–192 (RLH). Position 194 (Arg-194) interacts with FMN.

Belongs to the pyridoxamine 5'-phosphate oxidase family. Homodimer. Requires FMN as cofactor.

It catalyses the reaction pyridoxamine 5'-phosphate + O2 + H2O = pyridoxal 5'-phosphate + H2O2 + NH4(+). It carries out the reaction pyridoxine 5'-phosphate + O2 = pyridoxal 5'-phosphate + H2O2. It functions in the pathway cofactor metabolism; pyridoxal 5'-phosphate salvage; pyridoxal 5'-phosphate from pyridoxamine 5'-phosphate: step 1/1. Its pathway is cofactor metabolism; pyridoxal 5'-phosphate salvage; pyridoxal 5'-phosphate from pyridoxine 5'-phosphate: step 1/1. Its function is as follows. Catalyzes the oxidation of either pyridoxine 5'-phosphate (PNP) or pyridoxamine 5'-phosphate (PMP) into pyridoxal 5'-phosphate (PLP). The sequence is that of Pyridoxine/pyridoxamine 5'-phosphate oxidase from Thermosynechococcus vestitus (strain NIES-2133 / IAM M-273 / BP-1).